Here is a 162-residue protein sequence, read N- to C-terminus: uncharacterized protein (162 aa).

Residues 6–99 (LDDLDRAILK…YVTKTLSGFP (94 aa)) form the HTH asnC-type domain. Positions 25–44 (IAEISNQLKKPESTVHFRIK) form a DNA-binding region, H-T-H motif.

This is an uncharacterized protein from Pyrococcus horikoshii (strain ATCC 700860 / DSM 12428 / JCM 9974 / NBRC 100139 / OT-3).